Here is a 330-residue protein sequence, read N- to C-terminus: D-lactate dehydrogenase (330 aa).

NAD(+) contacts are provided by residues 156–157 (RI), Asp-176, 206–207 (VP), 233–235 (AAR), and Asp-259. Arg-235 is an active-site residue. Glu-264 is a catalytic residue. His-296 acts as the Proton donor in catalysis.

The protein belongs to the D-isomer specific 2-hydroxyacid dehydrogenase family.

It catalyses the reaction (R)-lactate + NAD(+) = pyruvate + NADH + H(+). The protein is D-lactate dehydrogenase (ldhD) of Staphylococcus aureus (strain Mu50 / ATCC 700699).